A 362-amino-acid polypeptide reads, in one-letter code: uncharacterized protein (362 aa).

7 helical membrane passes run 32 to 52, 75 to 95, 106 to 126, 148 to 168, 176 to 196, 287 to 307, and 329 to 349; these read GAGW…VGAV, FVDA…ADGV, VVML…DLSV, AAVG…GVGA, GVGT…VVVV, VFAL…PVAM, and VLVA…CGMF.

Belongs to the peptidase S58 family.

The protein localises to the cell membrane. Functionally, aminopeptidase. This is an uncharacterized protein from Mycobacterium leprae (strain TN).